The chain runs to 303 residues: Bifunctional protein FolD (303 aa).

NADP(+)-binding positions include 175–177 (GVS) and isoleucine 243.

The protein belongs to the tetrahydrofolate dehydrogenase/cyclohydrolase family. In terms of assembly, homodimer.

It carries out the reaction (6R)-5,10-methylene-5,6,7,8-tetrahydrofolate + NADP(+) = (6R)-5,10-methenyltetrahydrofolate + NADPH. The enzyme catalyses (6R)-5,10-methenyltetrahydrofolate + H2O = (6R)-10-formyltetrahydrofolate + H(+). Its pathway is one-carbon metabolism; tetrahydrofolate interconversion. Functionally, catalyzes the oxidation of 5,10-methylenetetrahydrofolate to 5,10-methenyltetrahydrofolate and then the hydrolysis of 5,10-methenyltetrahydrofolate to 10-formyltetrahydrofolate. In Xanthomonas axonopodis pv. citri (strain 306), this protein is Bifunctional protein FolD.